A 302-amino-acid chain; its full sequence is Bifunctional protein FolD (302 aa).

NADP(+) is bound by residues 165–167, Ser-190, and Ile-231; that span reads GRS.

It belongs to the tetrahydrofolate dehydrogenase/cyclohydrolase family. As to quaternary structure, homodimer.

It catalyses the reaction (6R)-5,10-methylene-5,6,7,8-tetrahydrofolate + NADP(+) = (6R)-5,10-methenyltetrahydrofolate + NADPH. The enzyme catalyses (6R)-5,10-methenyltetrahydrofolate + H2O = (6R)-10-formyltetrahydrofolate + H(+). The protein operates within one-carbon metabolism; tetrahydrofolate interconversion. Catalyzes the oxidation of 5,10-methylenetetrahydrofolate to 5,10-methenyltetrahydrofolate and then the hydrolysis of 5,10-methenyltetrahydrofolate to 10-formyltetrahydrofolate. This Prochlorococcus marinus (strain MIT 9211) protein is Bifunctional protein FolD.